The chain runs to 105 residues: Large ribosomal subunit protein bL21 (105 aa).

Belongs to the bacterial ribosomal protein bL21 family. Part of the 50S ribosomal subunit. Contacts protein L20.

This protein binds to 23S rRNA in the presence of protein L20. The sequence is that of Large ribosomal subunit protein bL21 from Rhizobium etli (strain ATCC 51251 / DSM 11541 / JCM 21823 / NBRC 15573 / CFN 42).